The sequence spans 430 residues: Asparagine--tRNA ligase (430 aa).

This sequence belongs to the class-II aminoacyl-tRNA synthetase family. Homodimer.

It is found in the cytoplasm. The enzyme catalyses tRNA(Asn) + L-asparagine + ATP = L-asparaginyl-tRNA(Asn) + AMP + diphosphate + H(+). This chain is Asparagine--tRNA ligase, found in Staphylococcus epidermidis (strain ATCC 35984 / DSM 28319 / BCRC 17069 / CCUG 31568 / BM 3577 / RP62A).